A 71-amino-acid chain; its full sequence is Prophage lysis protein S homolog EssD (71 aa).

Belongs to the lambda phage S protein family.

The sequence is that of Prophage lysis protein S homolog EssD (essD) from Escherichia coli (strain K12).